A 332-amino-acid chain; its full sequence is Adenosine receptor A2b (332 aa).

Topologically, residues 1–8 are extracellular; it reads MQLETQDA. A helical transmembrane segment spans residues 9-33; sequence LYVALELAIAALSVAGNVLVCAAVG. Residues 34–43 lie on the Cytoplasmic side of the membrane; the sequence is TSSALQTPTN. The chain crosses the membrane as a helical span at residues 44–67; it reads YFLVSLAAADVAVGLFAIPFAITI. At 68–78 the chain is on the extracellular side; sequence SLGFCTDFHSC. An intrachain disulfide couples Cys-78 to Cys-170. The helical transmembrane segment at 79 to 101 threads the bilayer; that stretch reads LFLACFVLVLTQSSIFSLLAVAV. Residues 102–121 lie on the Cytoplasmic side of the membrane; the sequence is DRYLAIRVPLRYKSLVTGTR. The chain crosses the membrane as a helical span at residues 122 to 144; it reads ARGVIAVLWVLAFGIGLTPFLGW. At 145–177 the chain is on the extracellular side; the sequence is NSKDSATNCTEPWDGTTNESCCLVKCLFENVVP. N-linked (GlcNAc...) asparagine glycans are attached at residues Asn-152 and Asn-162. Glu-173 contacts adenosine. A helical transmembrane segment spans residues 178–202; sequence MSYMVYFNFFGCVLPPLLIMLVIYI. The Cytoplasmic segment spans residues 203–234; it reads KIFMVACKQLQRTELVDHSRTVIQREIHAAKS. The helical transmembrane segment at 235–258 threads the bilayer; sequence LAMIVGIFALCWLPVHAINCVTLF. Asn-253 lines the adenosine pocket. Topologically, residues 259–266 are extracellular; it reads QPARAKDK. A helical transmembrane segment spans residues 267–290; sequence PKWAMNMAILLSHASSVVNPIVYA. Ser-278 and His-279 together coordinate adenosine. The Cytoplasmic segment spans residues 291–332; that stretch reads YRNRDFRYTFHKIISRYVLCQTDVLKSGNGQAGTQSALDVGL. Cys-310 carries the S-palmitoyl cysteine lipid modification.

Belongs to the G-protein coupled receptor 1 family.

The protein localises to the cell membrane. Functionally, receptor for adenosine. The activity of this receptor is mediated by G proteins which activate adenylyl cyclase. This Canis lupus familiaris (Dog) protein is Adenosine receptor A2b (ADORA2B).